The sequence spans 190 residues: ATP synthase subunit delta (190 aa).

The protein belongs to the ATPase delta chain family. In terms of assembly, F-type ATPases have 2 components, F(1) - the catalytic core - and F(0) - the membrane proton channel. F(1) has five subunits: alpha(3), beta(3), gamma(1), delta(1), epsilon(1). F(0) has three main subunits: a(1), b(2) and c(10-14). The alpha and beta chains form an alternating ring which encloses part of the gamma chain. F(1) is attached to F(0) by a central stalk formed by the gamma and epsilon chains, while a peripheral stalk is formed by the delta and b chains.

The protein localises to the cell inner membrane. F(1)F(0) ATP synthase produces ATP from ADP in the presence of a proton or sodium gradient. F-type ATPases consist of two structural domains, F(1) containing the extramembraneous catalytic core and F(0) containing the membrane proton channel, linked together by a central stalk and a peripheral stalk. During catalysis, ATP synthesis in the catalytic domain of F(1) is coupled via a rotary mechanism of the central stalk subunits to proton translocation. In terms of biological role, this protein is part of the stalk that links CF(0) to CF(1). It either transmits conformational changes from CF(0) to CF(1) or is implicated in proton conduction. The sequence is that of ATP synthase subunit delta from Salinibacter ruber (strain DSM 13855 / M31).